A 137-amino-acid chain; its full sequence is ATP synthase epsilon chain, chloroplastic (137 aa).

This sequence belongs to the ATPase epsilon chain family. F-type ATPases have 2 components, CF(1) - the catalytic core - and CF(0) - the membrane proton channel. CF(1) has five subunits: alpha(3), beta(3), gamma(1), delta(1), epsilon(1). CF(0) has three main subunits: a, b and c.

The protein resides in the plastid. Its subcellular location is the chloroplast thylakoid membrane. In terms of biological role, produces ATP from ADP in the presence of a proton gradient across the membrane. This is ATP synthase epsilon chain, chloroplastic from Pisum sativum (Garden pea).